We begin with the raw amino-acid sequence, 287 residues long: MIRSMTAYARREIKGEWGSATWEMRSVNQRYLETYFRLPEQFRSLEPVVRERIRTRLTRGKVECMLRFEPDASAQGELILNEKLAKQLVSAANWVKMQSDEGEINPVDILRWPGVMAAQEQDLDAIAAEILAALDGTLDDFIVARETEGQALKALIEQRLEGVSAEVAKVRAHMPEILQWQRERLVAKLEDAQVQLENNRLEQELVMMAQRIDVAEELDRLEAHVKETYNILKKKEAVGRRLDFMMQEFNRESNTLASKSINADVTNSAIELKVLIEQMREQIQNIE.

Belongs to the YicC/YloC family. A divalent metal cation serves as cofactor.

Its function is as follows. Probably a ssRNA endonuclease. Functionally, might contribute to small RNA (sRNA) regulation. The protein is Probable endoribonuclease YicC of Salmonella typhimurium (strain LT2 / SGSC1412 / ATCC 700720).